We begin with the raw amino-acid sequence, 89 residues long: Small ribosomal subunit protein uS15 (89 aa).

The protein belongs to the universal ribosomal protein uS15 family. In terms of assembly, part of the 30S ribosomal subunit. Forms a bridge to the 50S subunit in the 70S ribosome, contacting the 23S rRNA.

In terms of biological role, one of the primary rRNA binding proteins, it binds directly to 16S rRNA where it helps nucleate assembly of the platform of the 30S subunit by binding and bridging several RNA helices of the 16S rRNA. Its function is as follows. Forms an intersubunit bridge (bridge B4) with the 23S rRNA of the 50S subunit in the ribosome. This chain is Small ribosomal subunit protein uS15, found in Ligilactobacillus salivarius (strain UCC118) (Lactobacillus salivarius).